Here is a 388-residue protein sequence, read N- to C-terminus: Succinate--CoA ligase [ADP-forming] subunit beta (388 aa).

The ATP-grasp domain maps to 9-244 (KGILSGFDVR…PHEYSEEELE (236 aa)). ATP contacts are provided by residues K46, 53 to 55 (GRG), E99, V102, and E107. N199 and D213 together coordinate Mg(2+). Residues N264 and 320–322 (GIM) each bind substrate.

It belongs to the succinate/malate CoA ligase beta subunit family. In terms of assembly, heterotetramer of two alpha and two beta subunits. Mg(2+) is required as a cofactor.

The catalysed reaction is succinate + ATP + CoA = succinyl-CoA + ADP + phosphate. It carries out the reaction GTP + succinate + CoA = succinyl-CoA + GDP + phosphate. It functions in the pathway carbohydrate metabolism; tricarboxylic acid cycle; succinate from succinyl-CoA (ligase route): step 1/1. Its function is as follows. Succinyl-CoA synthetase functions in the citric acid cycle (TCA), coupling the hydrolysis of succinyl-CoA to the synthesis of either ATP or GTP and thus represents the only step of substrate-level phosphorylation in the TCA. The beta subunit provides nucleotide specificity of the enzyme and binds the substrate succinate, while the binding sites for coenzyme A and phosphate are found in the alpha subunit. In Anaplasma phagocytophilum (strain HZ), this protein is Succinate--CoA ligase [ADP-forming] subunit beta.